The following is a 203-amino-acid chain: Glycerol-3-phosphate acyltransferase (203 aa).

4 helical membrane passes run M4–I24, P80–F100, P117–F137, and Y139–K159.

This sequence belongs to the PlsY family. As to quaternary structure, probably interacts with PlsX.

It localises to the cell inner membrane. It catalyses the reaction an acyl phosphate + sn-glycerol 3-phosphate = a 1-acyl-sn-glycero-3-phosphate + phosphate. It participates in lipid metabolism; phospholipid metabolism. Functionally, catalyzes the transfer of an acyl group from acyl-phosphate (acyl-PO(4)) to glycerol-3-phosphate (G3P) to form lysophosphatidic acid (LPA). This enzyme utilizes acyl-phosphate as fatty acyl donor, but not acyl-CoA or acyl-ACP. The protein is Glycerol-3-phosphate acyltransferase of Vibrio vulnificus (strain YJ016).